The chain runs to 200 residues: NAD(P)H dehydrogenase (quinone) (200 aa).

The Flavodoxin-like domain occupies 7-199 (LAIVFYSSTG…RQVELTAKLL (193 aa)). FMN-binding positions include 13–18 (SSTGTG), 86–88 (TRF), 121–127 (SAQNVNG), and histidine 142.

It belongs to the WrbA family. Homotetramer. FMN is required as a cofactor.

The enzyme catalyses a quinone + NADH + H(+) = a quinol + NAD(+). It carries out the reaction a quinone + NADPH + H(+) = a quinol + NADP(+). The chain is NAD(P)H dehydrogenase (quinone) from Deinococcus radiodurans (strain ATCC 13939 / DSM 20539 / JCM 16871 / CCUG 27074 / LMG 4051 / NBRC 15346 / NCIMB 9279 / VKM B-1422 / R1).